Consider the following 478-residue polypeptide: NADH-quinone oxidoreductase subunit N (478 aa).

The next 13 membrane-spanning stretches (helical) occupy residues 8–28, 38–58, 62–82, 106–126, 160–180, 200–220, 234–254, 268–288, 300–320, 322–342, 368–388, 398–418, and 445–465; these read LVLP…FGVW, ILWA…LGTG, AFGG…VILV, PILI…GDLM, FVLG…VYGF, IGLL…VSAV, PTPV…ALIA, WGQI…IAGI, SSIS…AAGV, SMLL…AFIL, AFAL…LGFF, IGAG…IGAF, and FAFL…MAGV.

It belongs to the complex I subunit 2 family. In terms of assembly, NDH-1 is composed of 14 different subunits. Subunits NuoA, H, J, K, L, M, N constitute the membrane sector of the complex.

Its subcellular location is the cellular chromatophore membrane. The enzyme catalyses a quinone + NADH + 5 H(+)(in) = a quinol + NAD(+) + 4 H(+)(out). NDH-1 shuttles electrons from NADH, via FMN and iron-sulfur (Fe-S) centers, to quinones in the respiratory chain. The immediate electron acceptor for the enzyme in this species is believed to be ubiquinone. Couples the redox reaction to proton translocation (for every two electrons transferred, four hydrogen ions are translocated across the cytoplasmic membrane), and thus conserves the redox energy in a proton gradient. The chain is NADH-quinone oxidoreductase subunit N from Rhodobacter capsulatus (Rhodopseudomonas capsulata).